A 735-amino-acid chain; its full sequence is Rho GTPase-activating protein SYDE1 (735 aa).

Disordered regions lie at residues 1–253 (MAEP…PYEV), 601–655 (PDTR…AGDW), and 669–706 (FLSGPDYDHVTGSDSEEDEDESGEPRGTTDFEDEFDAP). Residues 14–47 (RGREKLPRKKSDAKDRGRPAQRSEPKPPEPEPRV) show a composition bias toward basic and acidic residues. Over residues 151–160 (PTKTSRTKSP) the composition is skewed to low complexity. 4 positions are modified to phosphoserine: S224, S231, S235, and S244. Positions 249–366 (RPYEVGPSAR…FRGCQAQQLA (118 aa)) constitute a C2 domain. The region spanning 398–604 (LPLQLLVERE…YLLQSWPDTR (207 aa)) is the Rho-GAP domain. Residues 669-679 (FLSGPDYDHVT) are compositionally biased toward basic and acidic residues. S681 and S683 each carry phosphoserine.

Palmitoylated. Probably palmitoylated by ZDHHC3 and ZDHHC7.

In terms of biological role, GTPase activator for the Rho-type GTPases. As a GCM1 downstream effector, it is involved in placental development and positively regulates trophoblast cells migration. It regulates cytoskeletal remodeling by controlling the activity of Rho GTPases including RHOA, CDC42 and RAC1. The sequence is that of Rho GTPase-activating protein SYDE1 (Syde1) from Rattus norvegicus (Rat).